The primary structure comprises 834 residues: Protein SEY1 (834 aa).

The disordered stretch occupies residues 1 to 26; it reads MSNVPSPTVTLEGDSPDAAHEAVSSS. At 1–733 the chain is on the cytoplasmic side; that stretch reads MSNVPSPTVT…KRSIMQHVTQ (733 aa). The GB1/RHD3-type G domain occupies 63–296; that stretch reads PGDYRIISVF…SESFLFKPNY (234 aa). A GTP-binding site is contributed by 73-80; sequence GSQSTGKS. Residues 659–688 adopt a coiled-coil conformation; the sequence is VRDKKLKRQYETVREEKEAEEEDEDEWDSE. The disordered stretch occupies residues 670-689; it reads TVREEKEAEEEDEDEWDSED. Over residues 676 to 689 the composition is skewed to acidic residues; the sequence is EAEEEDEDEWDSED. Residues 734–754 traverse the membrane as a helical segment; it reads IPYYIYIVILVLGWNEFMAIL. The Lumenal segment spans residues 755-757; the sequence is RNP. Residues 758–778 form a helical membrane-spanning segment; it reads FFFTLLIMLAGATYVMYSMNL. The Cytoplasmic portion of the chain corresponds to 779 to 834; sequence LGPASIVVQRMANEALGLAKEKLREFVVDDHMQHGHNMKKMTTNDIELDDLSEEST.

Belongs to the TRAFAC class dynamin-like GTPase superfamily. GB1/RHD3 GTPase family. RHD3 subfamily.

The protein resides in the endoplasmic reticulum membrane. Cooperates with the reticulon proteins and tubule-shaping DP1 family proteins to generate and maintain the structure of the tubular endoplasmic reticulum network. Has GTPase activity, which is required for its function in ER organization. This Clavispora lusitaniae (strain ATCC 42720) (Yeast) protein is Protein SEY1.